We begin with the raw amino-acid sequence, 467 residues long: Mothers against decapentaplegic homolog 2 (467 aa).

Ser2 is modified (N-acetylserine). Residue Thr8 is modified to Phosphothreonine. The MH1 domain maps to 10-176 (PVVKRLLGWK…YQRVETPVLP (167 aa)). N6-acetyllysine is present on Lys19. Cys74, Cys149, Cys161, and His166 together coordinate Zn(2+). Positions 207 to 217 (PAGIEPQSNYI) are enriched in polar residues. Positions 207–251 (PAGIEPQSNYIPETPPPGYISEDGETSDQQLNQSMDTGSPAELSP) are disordered. Residue Thr220 is modified to Phosphothreonine. A PY-motif motif is present at residues 221–225 (PPPGY). Polar residues predominate over residues 233–243 (SDQQLNQSMDT). The residue at position 240 (Ser240) is a Phosphoserine; by CAMK2. Phosphoserine is present on residues Ser245, Ser250, Ser255, Ser458, Ser460, and Ser464. An MH2 domain is found at 274-467 (WCSIAYYELN…SPSVRCSSMS (194 aa)). A phosphoserine; by TGFBR1 mark is found at Ser465 and Ser467.

It belongs to the dwarfin/SMAD family. Monomer; in the absence of TGF-beta. Heterodimer; in the presence of TGF-beta. Forms a heterodimer with co-SMAD, SMAD4, in the nucleus to form the transactivation complex SMAD2/SMAD4. Found in a complex with SMAD3 and TRIM33 upon addition of TGF-beta. Identified in a complex that contains at least ZNF451, SMAD2, SMAD3 and SMAD4. Interacts (via the MH2 domain) with ZFYVE9; may form trimers with the SMAD4 co-SMAD. Interacts with TAZ/WWRT1. Interacts with FOXH1. Interacts with SNW1. Interacts with CREB-binding protein (CBP) and EP300. Interacts with SNON. Interacts with ALK4/ACVR1B. Interacts with SKOR1. Interacts with SKOR2. Interacts with PRDM16. Interacts (via MH2 domain) with LEMD3. Interacts with RBPMS. Interacts with WWP1. Interacts (dephosphorylated form, via the MH1 and MH2 domains) with RANBP3 (via its C-terminal R domain); the interaction results in the export of dephosphorylated SMAD3 out of the nucleus and termination of the TGF-beta signaling. Interacts with PDPK1 (via PH domain). Interacts with DAB2; the interactions are enhanced upon TGF-beta stimulation. Interacts with USP15. Interacts with PPP5C. Interacts with LDLRAD4 (via the SMAD interaction motif). Interacts (via MH2 domain) with PMEPA1 (via the SMAD interaction motif). Interacts with ZFHX3. Interacts with ZNF451. Interacts with SMURF2 when phosphorylated on Ser-465/467. Interacts with PPM1A. Interacts with TGF-beta. Interacts with TGFBR1. Interacts with TGIF. Interacts with SMAD3 and TRIM33. Interacts with ZNF580. Interacts with NEDD4L in response to TGF-beta. Interacts with HGS. Interacts with AIP1. Interacts with WWP1. Interacts with PML. Interacts weakly with ZNF8. Interacts (when phosphorylated) with RNF111; RNF111 acts as an enhancer of the transcriptional responses by mediating ubiquitination and degradation of SMAD2 inhibitors. Interacts with YAP1 (when phosphorylated at 'Ser-55'). Interacts when phosphorylated with IPO7; the interaction facilitates translocation of SMAD2 to the nucleus. Interacts with MTMR4; negatively regulates TGF-beta signaling through SMAD2 dephosphorylation and retention in endosomes. In terms of processing, in response to TGF-beta, phosphorylated on the C-terminal SXS motif by TGF-beta and activin type 1 receptor kinases, phosphorylation declines progressively in a KMT5A-dependent manner. Phosphorylation in this motif is required for interaction with a number of proteins including SMURF2, SNON and SMAD4 in response to TGF-beta. Dephosphorylated in this motif by PPM1A leading to disruption of the SMAD2/3-SMAD4 complex, nuclear export and termination of the TGF-beta signaling. In response to decorin, the naturally occurring inhibitor of TGF-beta signaling, phosphorylated on Ser-240 by CaMK2. Phosphorylated by MAPK3 upon EGF stimulation; which increases transcriptional activity and stability, and is blocked by calmodulin. Phosphorylated by PDPK1. Acetylated on Lys-19 by coactivators in response to TGF-beta signaling, which increases transcriptional activity. Post-translationally, in response to TGF-beta, ubiquitinated by NEDD4L; which promotes its degradation. Monoubiquitinated, leading to prevent DNA-binding. Deubiquitination by USP15 alleviates inhibition and promotes activation of TGF-beta target genes. Ubiquitinated by RNF111, leading to its degradation: only SMAD2 proteins that are 'in use' are targeted by RNF111, RNF111 playing a key role in activating SMAD2 and regulating its turnover.

Its subcellular location is the cytoplasm. It is found in the nucleus. Receptor-regulated SMAD (R-SMAD) that is an intracellular signal transducer and transcriptional modulator activated by TGF-beta (transforming growth factor) and activin type 1 receptor kinases. Binds the TRE element in the promoter region of many genes that are regulated by TGF-beta and, on formation of the SMAD2/SMAD4 complex, activates transcription. Promotes TGFB1-mediated transcription of odontoblastic differentiation genes in dental papilla cells. Positively regulates PDPK1 kinase activity by stimulating its dissociation from the 14-3-3 protein YWHAQ which acts as a negative regulator. The protein is Mothers against decapentaplegic homolog 2 (SMAD2) of Bos taurus (Bovine).